The following is a 284-amino-acid chain: UPF0354 protein SERP1303 (284 aa).

It belongs to the UPF0354 family.

This chain is UPF0354 protein SERP1303, found in Staphylococcus epidermidis (strain ATCC 35984 / DSM 28319 / BCRC 17069 / CCUG 31568 / BM 3577 / RP62A).